The primary structure comprises 140 residues: ATP synthase epsilon chain (140 aa).

It belongs to the ATPase epsilon chain family. F-type ATPases have 2 components, CF(1) - the catalytic core - and CF(0) - the membrane proton channel. CF(1) has five subunits: alpha(3), beta(3), gamma(1), delta(1), epsilon(1). CF(0) has three main subunits: a, b and c.

The protein localises to the cell inner membrane. In terms of biological role, produces ATP from ADP in the presence of a proton gradient across the membrane. The protein is ATP synthase epsilon chain (atpC) of Vibrio alginolyticus.